The sequence spans 173 residues: MKTKEVVDDITMNRAITRITYEIIERNKELNQVVLAGIKTRGVHLAHRIQKRLAQLEQIDIPVAEIDTKPFRDDKKSQEADSTLIPVDITDRQVILIDDVLYTGRTIRAAIDNLVSHGRPSRVSLAVLVDRGHRELPIRTDYIGKNIPTSRTEEIIVEMTETDGQDRILIKGE.

The PRPP-binding signature appears at V94–T106.

This sequence belongs to the purine/pyrimidine phosphoribosyltransferase family. PyrR subfamily. As to quaternary structure, homodimer and homohexamer; in equilibrium.

The enzyme catalyses UMP + diphosphate = 5-phospho-alpha-D-ribose 1-diphosphate + uracil. Functionally, regulates transcriptional attenuation of the pyrimidine nucleotide (pyr) operon by binding in a uridine-dependent manner to specific sites on pyr mRNA. This disrupts an antiterminator hairpin in the RNA and favors formation of a downstream transcription terminator, leading to a reduced expression of downstream genes. In terms of biological role, also displays a weak uracil phosphoribosyltransferase activity which is not physiologically significant. The protein is Bifunctional protein PyrR of Streptococcus gordonii (strain Challis / ATCC 35105 / BCRC 15272 / CH1 / DL1 / V288).